A 213-amino-acid polypeptide reads, in one-letter code: Orotate phosphoribosyltransferase (213 aa).

A 5-phospho-alpha-D-ribose 1-diphosphate-binding site is contributed by Lys26. Residue 34–35 participates in orotate binding; the sequence is FF. 5-phospho-alpha-D-ribose 1-diphosphate is bound by residues 72–73, Arg99, Lys100, Lys103, His105, and 124–132; these read YK and DDVITAGTA. Orotate is bound by residues Thr128 and Arg156.

It belongs to the purine/pyrimidine phosphoribosyltransferase family. PyrE subfamily. In terms of assembly, homodimer. It depends on Mg(2+) as a cofactor.

It carries out the reaction orotidine 5'-phosphate + diphosphate = orotate + 5-phospho-alpha-D-ribose 1-diphosphate. Its pathway is pyrimidine metabolism; UMP biosynthesis via de novo pathway; UMP from orotate: step 1/2. Catalyzes the transfer of a ribosyl phosphate group from 5-phosphoribose 1-diphosphate to orotate, leading to the formation of orotidine monophosphate (OMP). The polypeptide is Orotate phosphoribosyltransferase (Thioalkalivibrio sulfidiphilus (strain HL-EbGR7)).